The chain runs to 234 residues: Large ribosomal subunit protein uL1 (234 aa).

This sequence belongs to the universal ribosomal protein uL1 family. As to quaternary structure, part of the 50S ribosomal subunit.

Its function is as follows. Binds directly to 23S rRNA. The L1 stalk is quite mobile in the ribosome, and is involved in E site tRNA release. Functionally, protein L1 is also a translational repressor protein, it controls the translation of the L11 operon by binding to its mRNA. The polypeptide is Large ribosomal subunit protein uL1 (Baumannia cicadellinicola subsp. Homalodisca coagulata).